The chain runs to 127 residues: Large ribosomal subunit protein uL22 (127 aa).

This sequence belongs to the universal ribosomal protein uL22 family. Part of the 50S ribosomal subunit.

This protein binds specifically to 23S rRNA; its binding is stimulated by other ribosomal proteins, e.g. L4, L17, and L20. It is important during the early stages of 50S assembly. It makes multiple contacts with different domains of the 23S rRNA in the assembled 50S subunit and ribosome. Its function is as follows. The globular domain of the protein is located near the polypeptide exit tunnel on the outside of the subunit, while an extended beta-hairpin is found that lines the wall of the exit tunnel in the center of the 70S ribosome. This chain is Large ribosomal subunit protein uL22, found in Brucella suis (strain ATCC 23445 / NCTC 10510).